Here is a 266-residue protein sequence, read N- to C-terminus: Killer cell lectin-like receptor 3 (266 aa).

At 1–48 (MSEPEVTYSTVRLHKSSGLQKLVRHEETQGPREVGNRKCSAPWQLIVK) the chain is on the cytoplasmic side. A helical; Signal-anchor for type II membrane protein transmembrane segment spans residues 49 to 69 (ALGILCFLLLVTVAVLAVKIF). Over 70–266 (QYNQHKQEIN…CGKKLDKFPD (197 aa)) the chain is Extracellular. N79, N87, N104, and N113 each carry an N-linked (GlcNAc...) asparagine glycan. The interval 147 to 151 (WFCYS) is involved in dimerization. A disulfide bridge links C149 with C154. In terms of domain architecture, C-type lectin spans 150-258 (YSTKCYYFIM…CNIPYYCICG (109 aa)). N160 is a glycosylation site (N-linked (GlcNAc...) asparagine). Implicated in MHC class I binding stretches follow at residues 160 to 162 (NKT), 195 to 196 (IP), 207 to 208 (KK), 224 to 233 (MKIRKMNFKS), and 240 to 245 (SKARIE). 3 cysteine pairs are disulfide-bonded: C167/C255, C171/C257, and C236/C249.

In terms of assembly, homodimer; disulfide-linked.

It is found in the membrane. Receptor on natural killer (NK) cells for class I MHC. The protein is Killer cell lectin-like receptor 3 (Klra3) of Mus musculus (Mouse).